The sequence spans 198 residues: GTP cyclohydrolase-2 (198 aa).

52 to 56 (RMHSE) serves as a coordination point for GTP. Positions 57, 68, and 70 each coordinate Zn(2+). GTP-binding positions include glutamine 73, 94–96 (EGR), and threonine 116. The active-site Proton acceptor is the aspartate 128. Arginine 130 functions as the Nucleophile in the catalytic mechanism. Residues threonine 151 and lysine 156 each contribute to the GTP site.

It belongs to the GTP cyclohydrolase II family. Requires Zn(2+) as cofactor.

It carries out the reaction GTP + 4 H2O = 2,5-diamino-6-hydroxy-4-(5-phosphoribosylamino)-pyrimidine + formate + 2 phosphate + 3 H(+). It participates in cofactor biosynthesis; riboflavin biosynthesis; 5-amino-6-(D-ribitylamino)uracil from GTP: step 1/4. Catalyzes the conversion of GTP to 2,5-diamino-6-ribosylamino-4(3H)-pyrimidinone 5'-phosphate (DARP), formate and pyrophosphate. This is GTP cyclohydrolase-2 from Vibrio vulnificus (strain CMCP6).